The primary structure comprises 342 residues: Holliday junction branch migration complex subunit RuvB (342 aa).

A large ATPase domain (RuvB-L) region spans residues 1 to 179 (MTNILSPEKS…FGIPMRLNFY (179 aa)). ATP-binding positions include Ile-18, Arg-19, Gly-60, Lys-63, Thr-64, Thr-65, 126-128 (EDF), Arg-169, Tyr-179, and Arg-216. Residue Thr-64 coordinates Mg(2+). The interval 180–250 (NTEELKQVLN…ICDFGLKRLT (71 aa)) is small ATPAse domain (RuvB-S). Positions 253 to 342 (SIGLDSNDYR…HQFNILNENE (90 aa)) are head domain (RuvB-H). Residues Arg-289, Arg-308, and Arg-313 each contribute to the DNA site.

The protein belongs to the RuvB family. As to quaternary structure, homohexamer. Forms an RuvA(8)-RuvB(12)-Holliday junction (HJ) complex. HJ DNA is sandwiched between 2 RuvA tetramers; dsDNA enters through RuvA and exits via RuvB. An RuvB hexamer assembles on each DNA strand where it exits the tetramer. Each RuvB hexamer is contacted by two RuvA subunits (via domain III) on 2 adjacent RuvB subunits; this complex drives branch migration. In the full resolvosome a probable DNA-RuvA(4)-RuvB(12)-RuvC(2) complex forms which resolves the HJ.

The protein resides in the cytoplasm. It catalyses the reaction ATP + H2O = ADP + phosphate + H(+). The RuvA-RuvB-RuvC complex processes Holliday junction (HJ) DNA during genetic recombination and DNA repair, while the RuvA-RuvB complex plays an important role in the rescue of blocked DNA replication forks via replication fork reversal (RFR). RuvA specifically binds to HJ cruciform DNA, conferring on it an open structure. The RuvB hexamer acts as an ATP-dependent pump, pulling dsDNA into and through the RuvAB complex. RuvB forms 2 homohexamers on either side of HJ DNA bound by 1 or 2 RuvA tetramers; 4 subunits per hexamer contact DNA at a time. Coordinated motions by a converter formed by DNA-disengaged RuvB subunits stimulates ATP hydrolysis and nucleotide exchange. Immobilization of the converter enables RuvB to convert the ATP-contained energy into a lever motion, pulling 2 nucleotides of DNA out of the RuvA tetramer per ATP hydrolyzed, thus driving DNA branch migration. The RuvB motors rotate together with the DNA substrate, which together with the progressing nucleotide cycle form the mechanistic basis for DNA recombination by continuous HJ branch migration. Branch migration allows RuvC to scan DNA until it finds its consensus sequence, where it cleaves and resolves cruciform DNA. The protein is Holliday junction branch migration complex subunit RuvB of Rickettsia typhi (strain ATCC VR-144 / Wilmington).